A 442-amino-acid polypeptide reads, in one-letter code: SPRY domain-containing protein 3 (442 aa).

Residues 17–204 form the B30.2/SPRY domain; it reads DLNLHYRFLN…VRLHLNAELG (188 aa). Residues 371–394 form a disordered region; sequence EGEEEEEEEEEEEDGEEIEPEHEG. The segment covering 372 to 390 has biased composition (acidic residues); it reads GEEEEEEEEEEEDGEEIEP.

The sequence is that of SPRY domain-containing protein 3 (SPRYD3) from Homo sapiens (Human).